We begin with the raw amino-acid sequence, 379 residues long: Cytochrome b (379 aa).

The next 4 membrane-spanning stretches (helical) occupy residues 33–53 (FGSL…FLAM), 77–98 (WLIR…FIHV), 113–133 (WNIG…GYVL), and 178–198 (FFAF…VHLL). Positions 83 and 97 each coordinate heme b. Residues His-182 and His-196 each contribute to the heme b site. His-201 serves as a coordination point for a ubiquinone. Transmembrane regions (helical) follow at residues 226 to 246 (TKDL…ALFF), 288 to 308 (LGGV…PLLN), 320 to 340 (VTQV…WIGG), and 347 to 367 (FTTI…ILIP).

The protein belongs to the cytochrome b family. As to quaternary structure, the cytochrome bc1 complex contains 11 subunits: 3 respiratory subunits (MT-CYB, CYC1 and UQCRFS1), 2 core proteins (UQCRC1 and UQCRC2) and 6 low-molecular weight proteins (UQCRH/QCR6, UQCRB/QCR7, UQCRQ/QCR8, UQCR10/QCR9, UQCR11/QCR10 and a cleavage product of UQCRFS1). This cytochrome bc1 complex then forms a dimer. The cofactor is heme b.

It is found in the mitochondrion inner membrane. Component of the ubiquinol-cytochrome c reductase complex (complex III or cytochrome b-c1 complex) that is part of the mitochondrial respiratory chain. The b-c1 complex mediates electron transfer from ubiquinol to cytochrome c. Contributes to the generation of a proton gradient across the mitochondrial membrane that is then used for ATP synthesis. In Akodon mystax (Caparao grass mouse), this protein is Cytochrome b (MT-CYB).